Here is a 201-residue protein sequence, read N- to C-terminus: Protein GrpE (201 aa).

Positions 1 to 32 are disordered; that stretch reads MTDRDRQPEDTTAPTGEPVVSKPYIMPDDPEP.

It belongs to the GrpE family. Homodimer.

The protein resides in the cytoplasm. Its function is as follows. Participates actively in the response to hyperosmotic and heat shock by preventing the aggregation of stress-denatured proteins, in association with DnaK and GrpE. It is the nucleotide exchange factor for DnaK and may function as a thermosensor. Unfolded proteins bind initially to DnaJ; upon interaction with the DnaJ-bound protein, DnaK hydrolyzes its bound ATP, resulting in the formation of a stable complex. GrpE releases ADP from DnaK; ATP binding to DnaK triggers the release of the substrate protein, thus completing the reaction cycle. Several rounds of ATP-dependent interactions between DnaJ, DnaK and GrpE are required for fully efficient folding. This is Protein GrpE from Bradyrhizobium diazoefficiens (strain JCM 10833 / BCRC 13528 / IAM 13628 / NBRC 14792 / USDA 110).